The primary structure comprises 428 residues: MTWFIDRRLNGKNKSTVNRQRFLRRYKAQIKQSISEAINKRSVTDVDSGESVSIPTDDISEPMFHQGRGGLRHRVHPGNDHFIQNDRIERPQGGGGGGSGSGQGQASQDGEGQDEFVFQISKDEYLDLLFEDLALPNLKKNQHRQLNEYKTHRAGFTSNGVPANISVVRSLQNSLARRTAMTAGKRRELHALETELETISHSEPAQLLEEERLRREIAELRAKIERVPFIDTFDLRYKNYEKRPEPSSQAVMFCLMDVSGSMDQATKDMAKRFYILLYLFLSRTYKNVEVVYIRHHTQAKEVDEHEFFYSQETGGTIVSSALKLMDEVVKERYDPGQWNIYAAQASDGDNWADDSPLCHEILAKKLLPVVRYYSYIEITRRAHQTLWREYEHLQATFDNFAMQHIRDQEDIYPVFRELFQKQSANQSV.

Over residues 78–90 the composition is skewed to basic and acidic residues; sequence GNDHFIQNDRIER. Positions 78–111 are disordered; sequence GNDHFIQNDRIERPQGGGGGGSGSGQGQASQDGE. Positions 92 to 103 are enriched in gly residues; the sequence is QGGGGGGSGSGQ.

It belongs to the UPF0229 family.

The chain is UPF0229 protein YeaH from Salmonella enteritidis PT4 (strain P125109).